Here is a 205-residue protein sequence, read N- to C-terminus: ATP-dependent Clp protease proteolytic subunit (205 aa).

Serine 101 functions as the Nucleophile in the catalytic mechanism. The active site involves histidine 126.

This sequence belongs to the peptidase S14 family. In terms of assembly, component of the chloroplastic Clp protease core complex.

It is found in the plastid. The protein resides in the chloroplast stroma. It catalyses the reaction Hydrolysis of proteins to small peptides in the presence of ATP and magnesium. alpha-casein is the usual test substrate. In the absence of ATP, only oligopeptides shorter than five residues are hydrolyzed (such as succinyl-Leu-Tyr-|-NHMec, and Leu-Tyr-Leu-|-Tyr-Trp, in which cleavage of the -Tyr-|-Leu- and -Tyr-|-Trp bonds also occurs).. Functionally, cleaves peptides in various proteins in a process that requires ATP hydrolysis. Has a chymotrypsin-like activity. Plays a major role in the degradation of misfolded proteins. The sequence is that of ATP-dependent Clp protease proteolytic subunit from Pinus contorta (Shore pine).